The chain runs to 611 residues: tRNA uridine 5-carboxymethylaminomethyl modification enzyme MnmG (611 aa).

FAD is bound by residues 12-17 (GGGHAG), V124, and S179. 271-285 (GPRYCPSVEDKIVRF) serves as a coordination point for NAD(+). Q368 contacts FAD.

Belongs to the MnmG family. As to quaternary structure, homodimer. Heterotetramer of two MnmE and two MnmG subunits. It depends on FAD as a cofactor.

It localises to the cytoplasm. In terms of biological role, NAD-binding protein involved in the addition of a carboxymethylaminomethyl (cmnm) group at the wobble position (U34) of certain tRNAs, forming tRNA-cmnm(5)s(2)U34. This is tRNA uridine 5-carboxymethylaminomethyl modification enzyme MnmG from Mycoplasma mobile (strain ATCC 43663 / 163K / NCTC 11711) (Mesomycoplasma mobile).